The primary structure comprises 378 residues: Succinyl-diaminopimelate desuccinylase (378 aa).

H67 contributes to the Zn(2+) binding site. D69 is a catalytic residue. D100 contributes to the Zn(2+) binding site. E134 acts as the Proton acceptor in catalysis. Zn(2+) contacts are provided by E135, E163, and H349.

Belongs to the peptidase M20A family. DapE subfamily. Homodimer. Requires Zn(2+) as cofactor. Co(2+) serves as cofactor.

It catalyses the reaction N-succinyl-(2S,6S)-2,6-diaminopimelate + H2O = (2S,6S)-2,6-diaminopimelate + succinate. It functions in the pathway amino-acid biosynthesis; L-lysine biosynthesis via DAP pathway; LL-2,6-diaminopimelate from (S)-tetrahydrodipicolinate (succinylase route): step 3/3. Catalyzes the hydrolysis of N-succinyl-L,L-diaminopimelic acid (SDAP), forming succinate and LL-2,6-diaminopimelate (DAP), an intermediate involved in the bacterial biosynthesis of lysine and meso-diaminopimelic acid, an essential component of bacterial cell walls. This is Succinyl-diaminopimelate desuccinylase from Nitrosomonas eutropha (strain DSM 101675 / C91 / Nm57).